The primary structure comprises 120 residues: NAD(P)H-quinone oxidoreductase subunit 3, chloroplastic (120 aa).

3 consecutive transmembrane segments (helical) span residues 11–31, 65–85, and 89–109; these read VVFFIVACLVPILALSGSKLI, FALIFVIFDVETLFLYPWAIV, and LGITAFLETLIFLSILIIGLV.

This sequence belongs to the complex I subunit 3 family. As to quaternary structure, NDH is composed of at least 16 different subunits, 5 of which are encoded in the nucleus.

The protein resides in the plastid. The protein localises to the chloroplast thylakoid membrane. The catalysed reaction is a plastoquinone + NADH + (n+1) H(+)(in) = a plastoquinol + NAD(+) + n H(+)(out). It catalyses the reaction a plastoquinone + NADPH + (n+1) H(+)(in) = a plastoquinol + NADP(+) + n H(+)(out). NDH shuttles electrons from NAD(P)H:plastoquinone, via FMN and iron-sulfur (Fe-S) centers, to quinones in the photosynthetic chain and possibly in a chloroplast respiratory chain. The immediate electron acceptor for the enzyme in this species is believed to be plastoquinone. Couples the redox reaction to proton translocation, and thus conserves the redox energy in a proton gradient. This is NAD(P)H-quinone oxidoreductase subunit 3, chloroplastic from Mesostigma viride (Green alga).